A 368-amino-acid chain; its full sequence is 2-aminoethylphosphonate--pyruvate transaminase (368 aa).

An N6-(pyridoxal phosphate)lysine modification is found at Lys192.

Belongs to the class-V pyridoxal-phosphate-dependent aminotransferase family. PhnW subfamily. As to quaternary structure, homodimer. It depends on pyridoxal 5'-phosphate as a cofactor.

The catalysed reaction is (2-aminoethyl)phosphonate + pyruvate = phosphonoacetaldehyde + L-alanine. In terms of biological role, involved in phosphonate degradation. In Pseudomonas entomophila (strain L48), this protein is 2-aminoethylphosphonate--pyruvate transaminase.